Here is a 997-residue protein sequence, read N- to C-terminus: Mannuronan C5-epimerase AlgE2 (997 aa).

PbH1 repeat units lie at residues 133-155 (DRDV…DPHE), 157-179 (TINL…VADF), 180-202 (QIGG…NIVT), 204-226 (TNDF…VVQR), 257-279 (AHDV…RVYG), 280-315 (AEDV…GVSG), and 320-359 (TTGT…SVSN). 10 Hemolysin-type calcium-binding repeats span residues 388–403 (GTAG…AHET), 406–422 (GLDG…NDIL), 424–439 (GGAG…GADL), 557–573 (GHAG…DDIL), 574–591 (VGGA…ADVF), 696–711 (GSAG…ADEV), 713–730 (HGGG…ADVF), 828–839 (GGDGNDTLSGSS), 846–862 (GGVG…NDIL), and 864–880 (GGAG…SDIF).

This sequence belongs to the D-mannuronate C5-epimerase family. It depends on Ca(2+) as a cofactor.

It localises to the secreted. It catalyses the reaction [(1-&gt;4)-beta-D-mannuronosyl](n) = [alginate](n). It participates in glycan biosynthesis; alginate biosynthesis. Inhibited by zinc. Converts beta-D-mannuronic acid (M) to alpha-L-guluronic acid (G), producing a polymer with gel-forming capacity, required for the formation of the cyst coat. In Azotobacter vinelandii, this protein is Mannuronan C5-epimerase AlgE2.